Reading from the N-terminus, the 534-residue chain is CTP synthase (534 aa).

The amidoligase domain stretch occupies residues 1–265 (MKYIVVTGGV…TTQLMKHLRL (265 aa)). Serine 12 is a binding site for CTP. Serine 12 contacts UTP. An ATP-binding site is contributed by 13–18 (GLGKGI). Tyrosine 53 is a binding site for L-glutamine. Aspartate 70 contacts ATP. 2 residues coordinate Mg(2+): aspartate 70 and glutamate 140. Residues 147–149 (DIE), 186–191 (KTKPTQ), and lysine 222 each bind CTP. Residues 186 to 191 (KTKPTQ) and lysine 222 each bind UTP. One can recognise a Glutamine amidotransferase type-1 domain in the interval 289 to 530 (KLAIVGKYTN…VRAMCKYRKE (242 aa)). Residue glycine 352 participates in L-glutamine binding. The active-site Nucleophile; for glutamine hydrolysis is cysteine 379. L-glutamine-binding positions include 380-383 (LGMQ), glutamate 403, and arginine 460. Active-site residues include histidine 503 and glutamate 505.

It belongs to the CTP synthase family. As to quaternary structure, homotetramer.

It catalyses the reaction UTP + L-glutamine + ATP + H2O = CTP + L-glutamate + ADP + phosphate + 2 H(+). The enzyme catalyses L-glutamine + H2O = L-glutamate + NH4(+). The catalysed reaction is UTP + NH4(+) + ATP = CTP + ADP + phosphate + 2 H(+). It participates in pyrimidine metabolism; CTP biosynthesis via de novo pathway; CTP from UDP: step 2/2. With respect to regulation, allosterically activated by GTP, when glutamine is the substrate; GTP has no effect on the reaction when ammonia is the substrate. The allosteric effector GTP functions by stabilizing the protein conformation that binds the tetrahedral intermediate(s) formed during glutamine hydrolysis. Inhibited by the product CTP, via allosteric rather than competitive inhibition. In terms of biological role, catalyzes the ATP-dependent amination of UTP to CTP with either L-glutamine or ammonia as the source of nitrogen. Regulates intracellular CTP levels through interactions with the four ribonucleotide triphosphates. The sequence is that of CTP synthase from Methanosarcina mazei (strain ATCC BAA-159 / DSM 3647 / Goe1 / Go1 / JCM 11833 / OCM 88) (Methanosarcina frisia).